Here is a 319-residue protein sequence, read N- to C-terminus: Lipopolysaccharide heptosyltransferase 1 (319 aa).

The ADP-L-glycero-beta-D-manno-heptose site is built by T187, T188, K192, E222, M242, D261, T262, G263, and H266.

The protein belongs to the glycosyltransferase 9 family.

The protein localises to the cell inner membrane. The enzyme catalyses an alpha-Kdo-(2-&gt;4)-alpha-Kdo-(2-&gt;6)-lipid A + ADP-L-glycero-beta-D-manno-heptose = an L-alpha-D-Hep-(1-&gt;5)-[alpha-Kdo-(2-&gt;4)]-alpha-Kdo-(2-&gt;6)-lipid A + ADP + H(+). It catalyses the reaction alpha-Kdo-(2-&gt;4)-alpha-Kdo-(2-&gt;6)-lipid A (E. coli) + ADP-L-glycero-beta-D-manno-heptose = L-alpha-D-Hep-(1-&gt;5)-[alpha-Kdo-(2-&gt;4)]-alpha-Kdo-(2-&gt;6)-lipid A (E. coli) + ADP + H(+). It participates in bacterial outer membrane biogenesis; LPS core biosynthesis. In terms of biological role, glycosyltransferase involved in the biosynthesis of the core oligosaccharide region of lipopolysaccharide (LPS). Catalyzes the addition of the first heptose unit to one 3-deoxy-D-manno-octulosonic acid (Kdo) residue of the Kdo2-lipid A module. The analog ADP-mannose can serve as an alternative donor in place of ADP-L-glycero-D-manno-heptose for the glycosylation of Kdo2-lipid A. Displays no activity with ADP-glucose, GDP-mannose, UDP-glucose or UDP-galactose. The polypeptide is Lipopolysaccharide heptosyltransferase 1 (Escherichia coli (strain K12)).